Reading from the N-terminus, the 496-residue chain is Pyrrole-2-carboxylic acid decarboxylase (496 aa).

W166 contributes to the K(+) binding site. Residues V168, R170, Q187, and H188 each contribute to the prenylated FMN site. H188 contacts Mn(2+). 4 residues coordinate K(+): A218, A219, M221, and E229. Residue E229 coordinates prenylated FMN. A Mn(2+)-binding site is contributed by E229. The active-site Proton donor is E278. H386 contacts prenylated FMN.

It belongs to the UbiD family. UbiD-like/FDC subfamily. In terms of assembly, homodimer. It depends on prenylated FMN as a cofactor. Requires Mn(2+) as cofactor. K(+) serves as cofactor.

The catalysed reaction is pyrrole-2-carboxylate + H(+) = 1H-pyrrole + CO2. The enzyme catalyses pyrrole-2-carboxylate + H2O = 1H-pyrrole + hydrogencarbonate. With respect to regulation, imidazole acts as a reversible inhibitor via the formation of an imidazole-prenyl-FMN adduct. Activity is light sensitive. In terms of biological role, catalyzes the prenyl-FMN-dependent decarboxylation of pyrrole-2-carboxylate (P2C). Can also catalyze the carboxylation of pyrrole in the presence of elevated concentrations of CO(2) or bicarbonate. Can accept a modest range of heteroaromatic compounds such as 3-methylpyrrole-2-carboxylate, indole-3-carboxylate and furan-2-carboxylate, and shows very low activity with thiophene-2-carboxylate. Attenuates the virulence of P.aeruginosa in a Drosophila model when overexpressed. In Pseudomonas aeruginosa (strain ATCC 15692 / DSM 22644 / CIP 104116 / JCM 14847 / LMG 12228 / 1C / PRS 101 / PAO1), this protein is Pyrrole-2-carboxylic acid decarboxylase.